A 172-amino-acid polypeptide reads, in one-letter code: 3-hydroxydecanoyl-[acyl-carrier-protein] dehydratase (172 aa).

Residue H71 is part of the active site.

Belongs to the thioester dehydratase family. FabA subfamily. As to quaternary structure, homodimer.

Its subcellular location is the cytoplasm. It carries out the reaction a (3R)-hydroxyacyl-[ACP] = a (2E)-enoyl-[ACP] + H2O. The catalysed reaction is (3R)-hydroxydecanoyl-[ACP] = (2E)-decenoyl-[ACP] + H2O. The enzyme catalyses (2E)-decenoyl-[ACP] = (3Z)-decenoyl-[ACP]. Its pathway is lipid metabolism; fatty acid biosynthesis. Its function is as follows. Necessary for the introduction of cis unsaturation into fatty acids. Catalyzes the dehydration of (3R)-3-hydroxydecanoyl-ACP to E-(2)-decenoyl-ACP and then its isomerization to Z-(3)-decenoyl-ACP. Can catalyze the dehydratase reaction for beta-hydroxyacyl-ACPs with saturated chain lengths up to 16:0, being most active on intermediate chain length. The chain is 3-hydroxydecanoyl-[acyl-carrier-protein] dehydratase from Pectobacterium carotovorum subsp. carotovorum (strain PC1).